We begin with the raw amino-acid sequence, 567 residues long: MQPDHRKKSSVEVDFFTEYGEGSRYRIEEVIGKGSYGVVCSAYDTHTGEKVAIKKINDIFEHVSDATRILREIKLLRLLRHPDIVEIKHILLPPSRREFRDIYVVFELMESDLHQVIKANDDLTPEHYQFFLYQLLRGLKYIHTANVFHRDLKPKNILANADCKLKICDFGLARVAFNDTPTAIFWTDYVATRWYRAPELCGSFFSKYTPAIDIWSIGCIFAELLTGKPLFPGKNVVHQLDLMTDMLGTPSAEAIGRVRNEKARRYLSSMRKKKPIPFSHKFPHTDPLALRLLEKMLSFEPKDRPTAEEALADVYFKGLAKVEREPSAQPVTKLEFEFERRRITKEDVRELIYRESLEYHPKMLKEYLDGSEPTNFMYPSAVEHFKKQFAYLEEHYKNGTSHNPPERQQHASLPRACVLYSDNNHPVAQQSSAEVTDGLSKCSIRDERPRGADRNAQMPMSRIPINVPQTIQGAAVARPGKVVGSVLRYNNCGAATGVEALEQQQRRMVRNPAAASQYPKRTQPCKSNRGDEDCATAAEGPSRLKPNTQYIPQKVSAAQDTAMSRWY.

In terms of domain architecture, Protein kinase spans 25 to 316 (YRIEEVIGKG…AEEALADVYF (292 aa)). ATP contacts are provided by residues 31–39 (IGKGSYGVV) and Lys54. Residue Asp151 is the Proton acceptor of the active site. The residue at position 187 (Thr187) is a Phosphothreonine. A TXY motif is present at residues 187–189 (TDY). At Tyr189 the chain carries Phosphotyrosine. The residue at position 192 (Thr192) is a Phosphothreonine. Disordered stretches follow at residues 428–455 (AQQS…ADRN) and 512–567 (PAAA…SRWY). The segment covering 443-453 (SIRDERPRGAD) has biased composition (basic and acidic residues). Residues 545-567 (KPNTQYIPQKVSAAQDTAMSRWY) show a composition bias toward polar residues.

Belongs to the protein kinase superfamily. CMGC Ser/Thr protein kinase family. MAP kinase subfamily. In terms of processing, dually phosphorylated on Thr-187 and Tyr-189, which activates the enzyme.

The enzyme catalyses L-seryl-[protein] + ATP = O-phospho-L-seryl-[protein] + ADP + H(+). It carries out the reaction L-threonyl-[protein] + ATP = O-phospho-L-threonyl-[protein] + ADP + H(+). Activated by threonine and tyrosine phosphorylation. This is Mitogen-activated protein kinase 16 (MPK16) from Arabidopsis thaliana (Mouse-ear cress).